Here is a 79-residue protein sequence, read N- to C-terminus: D-alanyl carrier protein (79 aa).

One can recognise a Carrier domain in the interval 1–77 (MDIKSEVIEI…KIIAGIVELQ (77 aa)). S35 bears the O-(pantetheine 4'-phosphoryl)serine mark.

This sequence belongs to the DltC family. 4'-phosphopantetheine is transferred from CoA to a specific serine of apo-DCP.

The protein resides in the cytoplasm. It functions in the pathway cell wall biogenesis; lipoteichoic acid biosynthesis. In terms of biological role, carrier protein involved in the D-alanylation of lipoteichoic acid (LTA). The loading of thioester-linked D-alanine onto DltC is catalyzed by D-alanine--D-alanyl carrier protein ligase DltA. The DltC-carried D-alanyl group is further transferred to cell membrane phosphatidylglycerol (PG) by forming an ester bond, probably catalyzed by DltD. D-alanylation of LTA plays an important role in modulating the properties of the cell wall in Gram-positive bacteria, influencing the net charge of the cell wall. The protein is D-alanyl carrier protein of Streptococcus pneumoniae serotype 2 (strain D39 / NCTC 7466).